Here is a 245-residue protein sequence, read N- to C-terminus: Homeobox protein goosecoid (245 aa).

Residues 150-209 (KRRHRTIFTDEQLEALENLFQETKYPDVGTREQLARKVHLREEKVEVWFKNRRAKWRRQK) constitute a DNA-binding region (homeobox). The tract at residues 203 to 245 (AKWRRQKRSSSEESENAQKWNKASKTSPEKRQEDGKSDLDSDS) is disordered. Residues 219-228 (AQKWNKASKT) show a composition bias toward polar residues. The segment covering 229–245 (SPEKRQEDGKSDLDSDS) has biased composition (basic and acidic residues).

Belongs to the paired homeobox family. Bicoid subfamily.

It is found in the nucleus. Functionally, involved in the development of the organizer region in the gastrula (Hensen node in chicken). The protein is Homeobox protein goosecoid (GSC) of Gallus gallus (Chicken).